The chain runs to 378 residues: Cytochrome b (378 aa).

Transmembrane regions (helical) follow at residues 34–54 (FGSL…FLAM), 78–99 (WLLR…YLHV), 114–134 (WLIG…GYVL), and 179–199 (FFTF…IHLL). Heme b is bound by residues His-84 and His-98. Heme b contacts are provided by His-183 and His-197. His-202 contributes to the a ubiquinone binding site. The next 4 membrane-spanning stretches (helical) occupy residues 227-247 (FKDI…VLIS), 289-309 (LGGV…PFYN), 321-341 (INQV…WIGA), and 348-368 (YVLI…VNPL).

Belongs to the cytochrome b family. As to quaternary structure, the main subunits of complex b-c1 are: cytochrome b, cytochrome c1 and the Rieske protein. Heme b is required as a cofactor.

The protein localises to the mitochondrion inner membrane. Functionally, component of the ubiquinol-cytochrome c reductase complex (complex III or cytochrome b-c1 complex) that is part of the mitochondrial respiratory chain. The b-c1 complex mediates electron transfer from ubiquinol to cytochrome c. Contributes to the generation of a proton gradient across the mitochondrial membrane that is then used for ATP synthesis. In Drosophila sechellia (Fruit fly), this protein is Cytochrome b (mt:Cyt-b).